We begin with the raw amino-acid sequence, 347 residues long: D-fructose 1,6-bisphosphatase class 2/sedoheptulose 1,7-bisphosphatase (347 aa).

Mn(2+)-binding residues include Asp-33, Glu-57, Asp-97, and Glu-100. Residues 100 to 102 (EGT), Tyr-131, 176 to 178 (RKR), and 198 to 200 (DGD) contribute to the substrate site. Position 225 (Glu-225) interacts with Mn(2+).

The protein belongs to the FBPase class 2 family. Homotetramer. It depends on Mn(2+) as a cofactor.

It carries out the reaction beta-D-fructose 1,6-bisphosphate + H2O = beta-D-fructose 6-phosphate + phosphate. The enzyme catalyses D-sedoheptulose 1,7-bisphosphate + H2O = D-sedoheptulose 7-phosphate + phosphate. The protein operates within carbohydrate biosynthesis; Calvin cycle. Its function is as follows. Catalyzes the hydrolysis of fructose 1,6-bisphosphate (Fru 1,6-P2) and sedoheptulose 1,7-bisphosphate (Sed 1,7-P2) to fructose 6-phosphate and sedoheptulose 7-phosphate, respectively. The chain is D-fructose 1,6-bisphosphatase class 2/sedoheptulose 1,7-bisphosphatase from Synechococcus sp. (strain JA-2-3B'a(2-13)) (Cyanobacteria bacterium Yellowstone B-Prime).